The chain runs to 457 residues: tRNA (guanine(37)-N(1))-methyltransferase (457 aa).

Residues His225, 263 to 264 (DL), 291 to 292 (DG), and Asn358 contribute to the S-adenosyl-L-methionine site.

The protein belongs to the class I-like SAM-binding methyltransferase superfamily. TRM5/TYW2 family. Monomer.

It localises to the mitochondrion matrix. The protein resides in the nucleus. Its subcellular location is the cytoplasm. It carries out the reaction guanosine(37) in tRNA + S-adenosyl-L-methionine = N(1)-methylguanosine(37) in tRNA + S-adenosyl-L-homocysteine + H(+). In terms of biological role, specifically methylates the N1 position of guanosine-37 in various cytoplasmic and mitochondrial tRNAs. Methylation is not dependent on the nature of the nucleoside 5' of the target nucleoside. This is the first step in the biosynthesis of wybutosine (yW), a modified base adjacent to the anticodon of tRNAs and required for accurate decoding. This is tRNA (guanine(37)-N(1))-methyltransferase from Coprinopsis cinerea (strain Okayama-7 / 130 / ATCC MYA-4618 / FGSC 9003) (Inky cap fungus).